The chain runs to 399 residues: Octopine dehydrogenase (399 aa).

Residues 10–13 (GGNG) and 35–38 (FADE) each bind NADH. The pyruvate site is built by Gln-118 and Thr-143. Gln-118 is a substrate binding site. Cys-148 is a binding site for NAD(+). Met-206 contacts L-arginine. Position 212 (His-212) interacts with pyruvate. His-212 is an active-site residue. An NAD(+)-binding site is contributed by Arg-324.

The protein belongs to the lysopine/nopaline/octopine/opine/vitopine dehydrogenases family.

It carries out the reaction D-octopine + NAD(+) + H2O = L-arginine + pyruvate + NADH + H(+). Agmatine acts as a competitive inhibitor of the condensation reaction where the L-arginine and agmatine substrates compete for the same site. Its function is as follows. Catalyzes the reverse reaction of octopine dehydrogenation. Acts on L-arginine in preference to other substrates such as canavanine, cysteine, L-alanine, ornithine or norvaline, owing to the presence of the positively charged guanidium group. The polypeptide is Octopine dehydrogenase (Pecten maximus (King scallop)).